A 584-amino-acid polypeptide reads, in one-letter code: Cationic amino acid transporter 7, chloroplastic (584 aa).

The N-terminal 49 residues, 1 to 49 (MEAQYRNHDGDTSFSSLRVYLNSLSDTPSRFSRRAVSVSTSYDEMSRVR), are a transit peptide targeting the chloroplast. 14 consecutive transmembrane segments (helical) span residues 62 to 82 (WYDLIGLGIGGMIGAGVFVTT), 90 to 110 (AGPSIVVSYAIAGLCALLSAF), 131 to 151 (ITFGEFPAFITGANLIMDYVL), 185 to 205 (GFNEIDPIAVIVVLAVTFVIC), 214 to 234 (VNMVLTALHIAFIVFVIVMGF), 254 to 274 (FFPFGVSGVFNGAAMVYLSYI), 293 to 313 (IPMGISGSVAIVIVLYCLMAI), 346 to 366 (VVGIGASFGILTSLIVAMLGQ), 396 to 416 (ASAFLGIFTAVLALFTDLNVL), 417 to 437 (LNLVSIGTLFVFYMVANAVIF), 449 to 469 (WPTLSFLCLFSITSILFTLVW), 480 to 500 (FILGASTVTAIAIVQIFHCVV), 508 to 528 (FWGVPLMPWTPCVSIFLNIFL), and 540 to 560 (FGFFSGLVVLVYVFYSVHASY).

Belongs to the amino acid-polyamine-organocation (APC) superfamily. Cationic amino acid transporter (CAT) (TC 2.A.3.3) family.

Its subcellular location is the plastid. The protein resides in the chloroplast membrane. Its function is as follows. Permease involved in the transport of the cationic amino acids. The polypeptide is Cationic amino acid transporter 7, chloroplastic (CAT7) (Arabidopsis thaliana (Mouse-ear cress)).